We begin with the raw amino-acid sequence, 1896 residues long: MKASSGDQGSPPCFLRFPRPVRVVSGAEAELKCVVLGEPPPVVVWEKGGQQLAASERLSFPADGAEHGLLLTAALPTDAGVYVCRARNAAGEAYAAAAVTVLEPPASDPELQPAERPLPSPGSGEGAPVFLTGPRSQWVLRGAEVVLTCRAGGLPEPTLYWEKDGMALDEVWDSSHFALQPGRAEDGPGASLALRILAARLPDSGVYVCHARNAHGHAQAGALLQVHQPPESPPADPDEAPAPVVEPLKCAPKTFWVNEGKHAKFRCYVMGKPEPEIEWHWEGRPLLPDRRRLMYRDRDGGFVLKVLYCQAKDRGLYVCAARNSAGQTLSAVQLHVKEPRLRFTRPLQDVEGREHGIAVLECKVPNSRIPTAWFREDQRLLPCRKYEQIEEGTVRRLIIHRLKADDDGIYLCEMRGRVRTVANVTVKGPILKRLPRKLDVLEGENAVLLVETLEAGVEGRWSRDGEELPVICQSSSGHMHALVLPGVTREDAGEVTFSLGNSRTTTLLRVKCVKHSPPGPPILAEMFKGHKNTVLLTWKPPEPAPETPFIYRLERQEVGSEDWIQCFSIEKAGAVEVPGDCVPSEGDYRFRICTVSGHGRSPHVVFHGSAHLVPTARLVAGLEDVQVYDGEDAVFSLDLSTIIQGTWFLNGEELKSNEPEGQVEPGALRYRIEQKGLQHRLILHAVKHQDSGALVGFSCPGVQDSAALTIQESPVHILSPQDRVSLTFTTSERVVLTCELSRVDFPATWYKDGQKVEESELLVVKMDGRKHRLILPEAKVQDSGEFECRTEGVSAFFGVTVQDPPVHIVDPREHVFVHAITSECVMLACEVDREDAPVRWYKDGQEVEESDFVVLENEGPHRRLVLPATQPSDGGEFQCVAGDECAYFTVTITDVSSWIVYPSGKVYVAAVRLERVVLTCELCRPWAEVRWTKDGEEVVESPALLLQKEDTVRRLVLPAVQLEDSGEYLCEIDDESASFTVTVTEPPVRIIYPRDEVTLIAVTLECVVLMCELSREDAPVRWYKDGLEVEESEALVLERDGPRCRLVLPAAQPEDGGEFVCDAGDDSAFFTVTVTAPPERIVHPAARSLDLHFGAPGRVELRCEVAPAGSQVRWYKDGLEVEASDALQLGAEGPTRTLTLPHAQPEDAGEYVCETRHEAITFNVILAEPPVQFLALETTPSPLCVAPGEPVVLSCELSRAGAPVVWSHNGRPVQEGEGLELHAEGPRRVLCIQAAGPAHAGLYTCQSGAAPGAPSLSFTVQVAEPPVRVVAPEAAQTRVRSTPGGDLELVVHLSGPGGPVRWYKDGERLASQGRVQLEQAGARQVLRVQGARSGDAGEYLCDAPQDSRIFLVSVEEPLLVKLVSELTPLTVHEGDDATFRCEVSPPDADVTWLRNGAVVTPGPQVEMAQNGSSRILTLRGCQLGDAGTVTLRAGSTATSARLHVRETELLFLRRLQDVRAEEGQDVCLEVETGRVGAAGAVRWVRGGQPLPHDSRLSMAQDGHIHRLFIHGVILADQGTYGCESHHDRTLARLSVRPRQLRVLRPLEDVTISEGGSATFQLELSQEGVTGEWARGGVQLYPGPKCHIHSDGHRHRLVLNGLGLADSGCVSFTADSLRCAARLIVREVPVTIVRGPHDLEVTEGDTATFECELSQALADVTWEKDGNALTPSPRLRLQALGTRRLLQLRRCGPSDAGTYSCAVGTARAGPVRLTVRERTVAVLSELRSVSAREGDGATFECTVSEVETTGRWELGGRPLRPGARVRIRQEGKKHILVLSELRAEDAGEVRFQAGPAQSLALLEVEALPLQMCRHPPREKTVLVGRRAVLEVTVSRSGGHVCWLREGAELCPGDKYEMRSHGPTHSLVIHDVRPEDQGTYCCQAGQDSTHTRLLVEGN.

S10 is modified (phosphoserine). Positions 12 to 100 constitute an Ig-like 1 domain; that stretch reads PCFLRFPRPV…GEAYAAAAVT (89 aa). The interaction with TTN stretch occupies residues 17–19; that stretch reads FPR. A disulfide bridge links C33 with C84. Residues 85-94 form an interaction with TTN region; it reads RARNAAGEAY. Residues 106-127 are disordered; sequence ASDPELQPAERPLPSPGSGEGA. 3 Ig-like domains span residues 128–225, 243–330, and 339–425; these read PVFL…ALLQ, PVVE…QTLS, and PRLR…ANVT. 3 cysteine pairs are disulfide-bonded: C149–C209, C267–C319, and C362–C412. In terms of domain architecture, Fibronectin type-III spans 517–615; it reads PPGPPILAEM…FHGSAHLVPT (99 aa). 10 Ig-like domains span residues 714 to 800, 804 to 893, 902 to 982, 986 to 1075, 1078 to 1172, 1174 to 1261, 1265 to 1357, 1357 to 1534, 1628 to 1720, and 1794 to 1896; these read PVHI…FGVT, PPVH…VTIT, PSGK…FTVT, PPVR…VTVT, PERI…PPVQ, LALE…FTVQ, PPVR…VEEP, PLLV…ARLS, PVTI…RTVA, and PAQS…VEGN. Cystine bridges form between C738–C788, C829–C879, C920–C970, C1011–C1061, C1103–C1153, and C1195–C1245. Cystine bridges form between C1381–C1522 and C1650–C1700.

In terms of assembly, component of the 3M complex, composed of core components CUL7, CCDC8 and OBSL1. Interacts with CCDC8. Interacts with CUL7; the interaction is direct. Interacts with FBXW8. Interacts (via N-terminal Ig-like domain) with TTN/titin (via C-terminal Ig-like domain); the interaction is direct. As to expression, widely expressed, with predominant levels found in the heart.

The protein localises to the cytoplasm. The protein resides in the cytoskeleton. It localises to the microtubule organizing center. It is found in the centrosome. Its subcellular location is the perinuclear region. The protein localises to the golgi apparatus. Its function is as follows. Core component of the 3M complex, a complex required to regulate microtubule dynamics and genome integrity. It is unclear how the 3M complex regulates microtubules, it could act by controlling the level of a microtubule stabilizer. Acts as a regulator of the Cul7-RING(FBXW8) ubiquitin-protein ligase, playing a critical role in the ubiquitin ligase pathway that regulates Golgi morphogenesis and dendrite patterning in brain. Required to localize CUL7 to the Golgi apparatus in neurons. The polypeptide is Obscurin-like protein 1 (Homo sapiens (Human)).